Consider the following 677-residue polypeptide: Probable sulfate transporter 4.2 (677 aa).

The Cytoplasmic segment spans residues 1–83 (MSLAVKDLST…RTYRWHQYFK (83 aa)). A helical membrane pass occupies residues 84–104 (LDLMAGITVGIMLVPQAMSYA). At 105–108 (RLAG) the chain is on the extracellular side. The chain crosses the membrane as a helical span at residues 109-129 (LQPIYGLYSSFVPVFVYAVFG). Residues 130–133 (SSRQ) are Cytoplasmic-facing. Residues 134–154 (LAVGPVALVSLLVSNALSGIV) traverse the membrane as a helical segment. Residues 155-161 (DPSEELY) lie on the Extracellular side of the membrane. Residues 162–182 (TELAILLALMVGIFESIMGFL) form a helical membrane-spanning segment. The Cytoplasmic segment spans residues 183-189 (RLGWLIR). A helical membrane pass occupies residues 190–210 (FISHSVISGFTTASAVVIGLS). Residues 211 to 241 (QLKYFLGYSVSRSSKIMPVIDSIIAGADQFK) lie on the Extracellular side of the membrane. A helical membrane pass occupies residues 242–262 (WPPFLLGCTILVILLVMKHVG). Over 263–269 (KAKKELR) the chain is Cytoplasmic. The chain crosses the membrane as a helical span at residues 270-290 (FIRAAGPLTGLALGTIIAKVF). The Extracellular segment spans residues 291–318 (HPPSITLVGDIPQGLPKFSFPKSFDHAK). A helical transmembrane segment spans residues 319 to 339 (LLLPTSALITGVAILESVGIA). Over 340–355 (KALAAKNRYELDSNSE) the chain is Cytoplasmic. A helical transmembrane segment spans residues 356-376 (LFGLGVANIFGSLFSAYPTTG). Residues 377-392 (SFSRSAVNSESEAKTG) are Extracellular-facing. Residues 393 to 413 (LSGLVTGIIIGCSLLFLTPMF) form a helical membrane-spanning segment. Residues 414–420 (KFIPQCA) lie on the Cytoplasmic side of the membrane. The helical transmembrane segment at 421 to 441 (LAAIVISAVSGLVDYEGAIFL) threads the bilayer. Over 442–459 (WRVDKRDFTLWTITSTTT) the chain is Extracellular. A helical transmembrane segment spans residues 460–480 (LFFGIEIGVLIGVGFSLAFVI). Over 481–677 (HESANPHIAV…LEEPLLSREK (197 aa)) the chain is Cytoplasmic. The STAS domain occupies 505 to 629 (QYPEAYTYNG…VRVHDAVQVC (125 aa)).

The protein belongs to the SLC26A/SulP transporter (TC 2.A.53) family.

Its subcellular location is the membrane. In terms of biological role, h(+)/sulfate cotransporter that may play a role in the regulation of sulfate assimilation. This is Probable sulfate transporter 4.2 (SULTR4;2) from Arabidopsis thaliana (Mouse-ear cress).